Here is a 96-residue protein sequence, read N- to C-terminus: UPF0235 protein VV2877 (96 aa).

The protein belongs to the UPF0235 family.

This chain is UPF0235 protein VV2877, found in Vibrio vulnificus (strain YJ016).